The following is a 130-amino-acid chain: Small ribosomal subunit protein uS9 (130 aa).

Positions 111–130 (VERKKVGLHKARRATQFSKR) are disordered. A compositionally biased stretch (basic residues) spans 116-130 (VGLHKARRATQFSKR).

This sequence belongs to the universal ribosomal protein uS9 family.

This Xylella fastidiosa (strain M23) protein is Small ribosomal subunit protein uS9.